A 274-amino-acid polypeptide reads, in one-letter code: tRNA-cytidine(32) 2-sulfurtransferase (274 aa).

Positions 40 to 45 match the PP-loop motif motif; the sequence is SGGKDS. Residues cysteine 115, cysteine 118, and cysteine 206 each coordinate [4Fe-4S] cluster.

It belongs to the TtcA family. In terms of assembly, homodimer. Mg(2+) serves as cofactor. [4Fe-4S] cluster is required as a cofactor.

The protein localises to the cytoplasm. It carries out the reaction cytidine(32) in tRNA + S-sulfanyl-L-cysteinyl-[cysteine desulfurase] + AH2 + ATP = 2-thiocytidine(32) in tRNA + L-cysteinyl-[cysteine desulfurase] + A + AMP + diphosphate + H(+). It functions in the pathway tRNA modification. Functionally, catalyzes the ATP-dependent 2-thiolation of cytidine in position 32 of tRNA, to form 2-thiocytidine (s(2)C32). The sulfur atoms are provided by the cysteine/cysteine desulfurase (IscS) system. This is tRNA-cytidine(32) 2-sulfurtransferase from Pseudomonas aeruginosa (strain LESB58).